We begin with the raw amino-acid sequence, 238 residues long: Probable solute-binding protein AdeT2 (238 aa).

The protein belongs to the bacterial solute-binding protein 7 family.

Its function is as follows. Mediates antimicrobial resistance via active efflux. Contributes to resistance to antibiotics such as chloramphenicol, erythromycin and novobiocin. May be part of a tripartite ATP-independent periplasmic (TRAP) transport system. The protein is Probable solute-binding protein AdeT2 of Acinetobacter baumannii.